A 132-amino-acid chain; its full sequence is Fluoride-specific ion channel FluC 2 (132 aa).

4 helical membrane passes run 8–28 (LQLE…GALL), 41–61 (LLVN…PAAP), 66–86 (LLGI…LAAV), and 96–116 (AALG…ALGF). Residues G73 and T76 each contribute to the Na(+) site.

Belongs to the fluoride channel Fluc/FEX (TC 1.A.43) family.

Its subcellular location is the cell inner membrane. It catalyses the reaction fluoride(in) = fluoride(out). With respect to regulation, na(+) is not transported, but it plays an essential structural role and its presence is essential for fluoride channel function. Fluoride-specific ion channel. Important for reducing fluoride concentration in the cell, thus reducing its toxicity. This chain is Fluoride-specific ion channel FluC 2, found in Synechococcus sp. (strain CC9605).